Here is a 520-residue protein sequence, read N- to C-terminus: Peptide chain release factor 3 (520 aa).

Residues 8–277 (ESRKTFAIIS…FAPMPNARQT (270 aa)) enclose the tr-type G domain. GTP is bound by residues 17–24 (SHPDAGKT), 85–89 (DTPGH), and 139–142 (NKLD).

This sequence belongs to the TRAFAC class translation factor GTPase superfamily. Classic translation factor GTPase family. PrfC subfamily.

It localises to the cytoplasm. Increases the formation of ribosomal termination complexes and stimulates activities of RF-1 and RF-2. It binds guanine nucleotides and has strong preference for UGA stop codons. It may interact directly with the ribosome. The stimulation of RF-1 and RF-2 is significantly reduced by GTP and GDP, but not by GMP. This is Peptide chain release factor 3 from Staphylococcus aureus (strain USA300 / TCH1516).